Consider the following 108-residue polypeptide: DNA-binding protein HBbu (108 aa).

This sequence belongs to the bacterial histone-like protein family.

Histone-like DNA-binding protein which is capable of wrapping DNA to stabilize it, and thus to prevent its denaturation under extreme environmental conditions. In Borreliella afzelii (Borrelia afzelii), this protein is DNA-binding protein HBbu (hbb).